The following is a 259-amino-acid chain: UPF0246 protein ABBFA_001173 (259 aa).

It belongs to the UPF0246 family.

The sequence is that of UPF0246 protein ABBFA_001173 from Acinetobacter baumannii (strain AB307-0294).